The primary structure comprises 585 residues: MAGUK p55 subfamily member 3 (585 aa).

L27 domains follow at residues 6–60 and 61–118; these read EDSG…ERQS and PTPV…FDPV. One can recognise a PDZ domain in the interval 137 to 218; it reads IVRLVKNKEP…SITLKIIPAT (82 aa). Residues 226-296 enclose the SH3 domain; that stretch reads ESKVFMRALF…PSKQFQERRL (71 aa). Position 307 is a phosphoserine (S307). Positions 385–570 constitute a Guanylate kinase-like domain; it reads SRLVVLIGSL…VCSQLRAVIE (186 aa). The tract at residues 510 to 530 is disordered; it reads KRKTPPVSPDSEDPATPLDEQ.

It belongs to the MAGUK family. As to quaternary structure, interacts with HTR2C; this interaction stabilizes the receptor at the plasma membrane and prevents the desensitization of the HTR2C receptor-mediated calcium response. Interacts with HTR2A. Interacts with HTR4. Interacts (via PDZ domain) with CADM1 (via C-terminus)Interacts (via PDZ domain) with CADM1; this interaction connects CADM1 with DLG1. Interacts (via Guanylate kinase-like domain) with PALS1. Interacts with DLG1 (via N-terminus); this interaction connects CADM1 with DLG1 and links CADM1 with the regulatory subunit of phosphoinositide-3-kinase (PI3K) by forming a multiprotein complex and participates in cell spreading.

The protein resides in the apical cell membrane. It localises to the cell membrane. Its subcellular location is the cell junction. It is found in the adherens junction. Its function is as follows. Participates in cell spreading through the phosphoinositide-3-kinase (PI3K) pathway by connecting CADM1 to DLG1 and the regulatory subunit of phosphoinositide-3-kinase (PI3K). Stabilizes HTR2C at the plasma membrane and prevents its desensitization. May participates in the maintenance of adherens junctions. This is MAGUK p55 subfamily member 3 from Rattus norvegicus (Rat).